The primary structure comprises 245 residues: UDP-2,3-diacylglucosamine hydrolase (245 aa).

Mn(2+) contacts are provided by D8, H10, D41, N80, and H115. 80 to 81 serves as a coordination point for substrate; the sequence is NR. D123, S161, K165, K168, and H196 together coordinate substrate. Residues H196 and H198 each coordinate Mn(2+).

It belongs to the LpxH family. Requires Mn(2+) as cofactor.

The protein resides in the cell inner membrane. The catalysed reaction is UDP-2-N,3-O-bis[(3R)-3-hydroxytetradecanoyl]-alpha-D-glucosamine + H2O = 2-N,3-O-bis[(3R)-3-hydroxytetradecanoyl]-alpha-D-glucosaminyl 1-phosphate + UMP + 2 H(+). It functions in the pathway glycolipid biosynthesis; lipid IV(A) biosynthesis; lipid IV(A) from (3R)-3-hydroxytetradecanoyl-[acyl-carrier-protein] and UDP-N-acetyl-alpha-D-glucosamine: step 4/6. Hydrolyzes the pyrophosphate bond of UDP-2,3-diacylglucosamine to yield 2,3-diacylglucosamine 1-phosphate (lipid X) and UMP by catalyzing the attack of water at the alpha-P atom. Involved in the biosynthesis of lipid A, a phosphorylated glycolipid that anchors the lipopolysaccharide to the outer membrane of the cell. The sequence is that of UDP-2,3-diacylglucosamine hydrolase from Psychromonas ingrahamii (strain DSM 17664 / CCUG 51855 / 37).